Consider the following 140-residue polypeptide: Pre-mRNA-splicing factor NTC20 (140 aa).

Ser139 bears the Phosphoserine mark.

Belongs to the NTC complex (or PRP19-associated complex), composed of at least CEF1, CLF1, ISY1, NTC20, SNT309, SYF1, SYF2, and PRP19. The NTC complex associates with the spliceosome after the release of the U1 and U4 snRNAs and forms the CWC spliceosome subcomplex (or CEF1-associated complex) reminiscent of a late-stage spliceosome composed also of the U2, U5 and U6 snRNAs and at least BUD13, BRR2, CDC40, CUS1, CWC2, CWC15, CWC21, CWC22, CWC23, CWC24, CWC25, CWC27, ECM2, HSH155, IST3, LEA1, MSL1, PRP8, PRP9, PRP11, PRP21, PRP22, PRP45, PRP46, SLU7, SMB1, SMD1, SMD2, SMD3, SMX2, SMX3, SNU114, SPP2, RSE1 and YJU2. Interacts with CEF1, CLF1, ISY1, PRP46, and SYF1.

Its subcellular location is the nucleus. In terms of biological role, involved in pre-mRNA splicing. As a component of the NTC complex, associates to the spliceosome to mediate conformational rearrangement or to stabilize the structure of the spliceosome after U4 snRNA dissociation, which leads to spliceosome maturation. This is Pre-mRNA-splicing factor NTC20 (NTC20) from Saccharomyces cerevisiae (strain ATCC 204508 / S288c) (Baker's yeast).